Reading from the N-terminus, the 349-residue chain is MTRAKRKKEHIDHALSTGQKRQTGLDDITFVHVSLPETELSQVDTSTKIGELFLSSPIFINAMTGGGGKATFEINRALARAAAQTGIPVAVGSQMSALKDPDERPSYEIVRKENMKGLVFANLGSEATVEQAKRAVDMIEADMLQIHLNVIQEIVMPEGDRNFTGRLRRIEDICRSVSVPVAVKEVGFGMSRDTAARLFNVGVQAIDVGGFGGTNFSKIENLRRDKAVEFFDQWGISTAASLAEVSSISGDRPIIASGGIQDALDLAKSIALGASAAGMAGYFLKVLTASGEEALAAEIESLIEDFKRIMTVLGCRTIEQLKKAPLVIKGDTYHWLKARGVDPFVYSMR.

A substrate-binding site is contributed by 6-7 (RK). FMN contacts are provided by residues 62 to 64 (AMT), Ser-93, and Asn-122. Gln-152 contributes to the substrate binding site. Glu-153 lines the Mg(2+) pocket. FMN-binding positions include Lys-184, Thr-214, 258–259 (GG), and 280–281 (AG).

The protein belongs to the IPP isomerase type 2 family. As to quaternary structure, homooctamer. Dimer of tetramers. FMN serves as cofactor. It depends on NADPH as a cofactor. Mg(2+) is required as a cofactor.

It is found in the cytoplasm. The enzyme catalyses isopentenyl diphosphate = dimethylallyl diphosphate. Involved in the biosynthesis of isoprenoids. Catalyzes the 1,3-allylic rearrangement of the homoallylic substrate isopentenyl (IPP) to its allylic isomer, dimethylallyl diphosphate (DMAPP). The protein is Isopentenyl-diphosphate delta-isomerase of Bacillus licheniformis (strain ATCC 14580 / DSM 13 / JCM 2505 / CCUG 7422 / NBRC 12200 / NCIMB 9375 / NCTC 10341 / NRRL NRS-1264 / Gibson 46).